The sequence spans 451 residues: MSKITKVFAREILDSRGNPTIQVDVYTLAGGFGSAIVPSGASTGSREALELRDTNTKYADNWYGQKGVMTAVDNVNNIIAPEIIGLCCKNQRLIDQKMIELDGTPNKEKLGANAILGVSLAVAKAAANELRMPLFRYLGGTNPTLMPVPMLNVINGGEHASNTLDFQEFMIMPLGFRTFKEALQAANKVFHNLAKLLKKSGFETQVGDEGGFAPNFNSHEQALDFLVDAIKESGFNPGFKGENAVAIAIDAAASEFYNGQKYVFKKLKSASLNKNQADLDEKFEFNSEELLNYYGQLLAKYPIISIEDGFAESDWQGFIAFNQKYGNNHQIVGDDLTVTNVEILKKAINLKAINSILIKLNQIGTLSETLDAIHLAQKSGMTAVISHRSGESEDTTIADLAVAVSSGQIKTGSLSRTDRIAKYNRLLVIEEYLNSYAKADYIGREVFYNLK.

Residue Q167 participates in (2R)-2-phosphoglycerate binding. E209 acts as the Proton donor in catalysis. D250, E307, and D334 together coordinate Mg(2+). Positions 359, 388, 389, and 410 each coordinate (2R)-2-phosphoglycerate. The Proton acceptor role is filled by K359.

This sequence belongs to the enolase family. Mg(2+) serves as cofactor.

It localises to the cytoplasm. Its subcellular location is the secreted. The protein localises to the cell surface. It catalyses the reaction (2R)-2-phosphoglycerate = phosphoenolpyruvate + H2O. Its pathway is carbohydrate degradation; glycolysis; pyruvate from D-glyceraldehyde 3-phosphate: step 4/5. Functionally, catalyzes the reversible conversion of 2-phosphoglycerate (2-PG) into phosphoenolpyruvate (PEP). It is essential for the degradation of carbohydrates via glycolysis. This chain is Enolase, found in Mesomycoplasma hyopneumoniae (strain J / ATCC 25934 / NCTC 10110) (Mycoplasma hyopneumoniae).